The primary structure comprises 141 residues: Protein X (141 aa).

The tract at residues 25 to 52 (SSGPSFPRPAAGSAASSASSPSPSDDSD) is disordered. The tract at residues 68-113 (PCCLVFTCADLRTMDSTVNFVSWHANRQLGMPSKDLWTPYIKDQLL) is mitochondrial targeting sequence.

The protein belongs to the orthohepadnavirus protein X family. May form homodimer. May interact with host CEBPA, CFLAR, CREB1, DDB1, E4F1, HBXIP, HSPD1/HSP60, NFKBIA, POLR2E and SMAD4. Interacts with host SMC5-SMC6 complex and induces its degradation. Interacts with host TRPC4AP; leading to prevent ubiquitination of TRPC4AP. Interacts with host PLSCR1; this interaction promotes ubiquitination and degradation of HBx and impairs HBx-mediated cell proliferation. Post-translationally, a fraction may be phosphorylated in insect cells and HepG2 cells, a human hepatoblastoma cell line. Phosphorylated in vitro by host protein kinase C or mitogen-activated protein kinase. N-acetylated in insect cells.

Its subcellular location is the host cytoplasm. The protein resides in the host nucleus. It is found in the host mitochondrion. In terms of biological role, multifunctional protein that plays a role in silencing host antiviral defenses and promoting viral transcription. Does not seem to be essential for HBV infection. May be directly involved in development of cirrhosis and liver cancer (hepatocellular carcinoma). Most of cytosolic activities involve modulation of cytosolic calcium. The effect on apoptosis is controversial depending on the cell types in which the studies have been conducted. May induce apoptosis by localizing in mitochondria and causing loss of mitochondrial membrane potential. May also modulate apoptosis by binding host CFLAR, a key regulator of the death-inducing signaling complex (DISC). Promotes viral transcription by using the host E3 ubiquitin ligase DDB1 to target the SMC5-SMC6 complex to proteasomal degradation. This host complex would otherwise bind to viral episomal DNA, and prevents its transcription. Moderately stimulates transcription of many different viral and cellular transcription elements. Promoters and enhancers stimulated by HBx contain DNA binding sites for NF-kappa-B, AP-1, AP-2, c-EBP, ATF/CREB, or the calcium-activated factor NF-AT. This is Protein X from Woodchuck hepatitis B virus (isolate 2) (WHV).